The following is a 740-amino-acid chain: Ribosomal protein S6 kinase alpha-6 (740 aa).

The Protein kinase 1 domain maps to 67-326 (FELLKVLGQG…VEEIKRHTFF (260 aa)). ATP-binding positions include 73–81 (LGQGSFGKV) and K99. D192 (proton acceptor) is an active-site residue. Residues 327–396 (STIDWNKLYR…VAPVSLEESK (70 aa)) form the AGC-kinase C-terminal domain. The Protein kinase 2 domain occupies 420-677 (YELKEDIGVG…AEQVLKHSWI (258 aa)). ATP-binding positions include 426 to 434 (IGVGSYSIC) and K449. D537 serves as the catalytic Proton acceptor.

Belongs to the protein kinase superfamily. AGC Ser/Thr protein kinase family. S6 kinase subfamily. As to quaternary structure, forms a complex with either ERK1 or ERK2 in quiescent cells. Transiently dissociates following mitogenic stimulation. It depends on Mg(2+) as a cofactor.

It carries out the reaction L-seryl-[protein] + ATP = O-phospho-L-seryl-[protein] + ADP + H(+). The catalysed reaction is L-threonyl-[protein] + ATP = O-phospho-L-threonyl-[protein] + ADP + H(+). Activated by multiple phosphorylations on threonine and serine residues. Its function is as follows. Serine/threonine kinase that may play a role in mediating the growth-factor and stress induced activation of the transcription factor CREB. This Danio rerio (Zebrafish) protein is Ribosomal protein S6 kinase alpha-6 (rps6ka6).